A 90-amino-acid polypeptide reads, in one-letter code: Early nodulin-36A (90 aa).

The chain is Early nodulin-36A from Glycine max (Soybean).